Consider the following 576-residue polypeptide: Cilia- and flagella-associated protein 100 (576 aa).

A disordered region spans residues 1–29 (MPIYDEASVPGTAAGRSTTDVGATAGANP). Coiled coils occupy residues 125–226 (IFLL…CRRY), 254–311 (VAEW…IMKE), and 342–408 (YKQL…LKDR). Disordered regions lie at residues 417–439 (TLSM…PGGP), 495–519 (AEKA…HREH), and 538–563 (TGKP…RNDE).

This sequence belongs to the CFAP100 family. As to quaternary structure, interacts with FAP73; form the modifier of inner arm (MIA) complex.

The protein localises to the cytoplasm. The protein resides in the cytoskeleton. It is found in the flagellum axoneme. Its function is as follows. As part of MIA, a complex associated with the outer doublet microtubules of the axoneme, may play a role in ciliary/flagellar motility by regulating the assembly and the activity of axonemal inner dynein arm. This chain is Cilia- and flagella-associated protein 100, found in Chlamydomonas reinhardtii (Chlamydomonas smithii).